The primary structure comprises 381 residues: Phthiodiolone/phenolphthiodiolone dimycocerosates ketoreductase (381 aa).

This sequence belongs to the mer family. Phthiodiolone/phenolphthiodiolone dimycocerosates ketoreductase subfamily.

Its function is as follows. Catalyzes the reduction of the keto moiety of phthiodiolone dimycocerosates (DIM B) and glycosylated phenolphthiodiolone dimycocerosates to form the intermediate compounds phthiotriol and glycosylated phenolphthiotriol dimycocerosates during phthiocerol dimycocerosates (DIM A) and glycosylated phenolphthiocerol dimycocerosates (PGL) biosynthesis. The polypeptide is Phthiodiolone/phenolphthiodiolone dimycocerosates ketoreductase (Mycobacterium tuberculosis (strain CDC 1551 / Oshkosh)).